The primary structure comprises 367 residues: Protein RecA (367 aa).

The span at 1–14 (MSTEVNANQSPNAE) shows a compositional bias: polar residues. Positions 1–24 (MSTEVNANQSPNAESRQEAARSGE) are disordered. The span at 15–24 (SRQEAARSGE) shows a compositional bias: basic and acidic residues. 84–91 (GPESSGKT) contacts ATP. A disordered region spans residues 348 to 367 (GSEVSSNSMRPLTTANRKAA). Over residues 349-367 (SEVSSNSMRPLTTANRKAA) the composition is skewed to polar residues.

Belongs to the RecA family.

It is found in the cytoplasm. Functionally, can catalyze the hydrolysis of ATP in the presence of single-stranded DNA, the ATP-dependent uptake of single-stranded DNA by duplex DNA, and the ATP-dependent hybridization of homologous single-stranded DNAs. It interacts with LexA causing its activation and leading to its autocatalytic cleavage. This Prochlorococcus marinus (strain MIT 9211) protein is Protein RecA.